A 551-amino-acid polypeptide reads, in one-letter code: Arginine--tRNA ligase (551 aa).

The 'HIGH' region motif lies at 123 to 133 (ANPTGPLTIGR).

Belongs to the class-I aminoacyl-tRNA synthetase family. In terms of assembly, monomer.

The protein resides in the cytoplasm. The catalysed reaction is tRNA(Arg) + L-arginine + ATP = L-arginyl-tRNA(Arg) + AMP + diphosphate. The chain is Arginine--tRNA ligase from Chlorobium limicola (strain DSM 245 / NBRC 103803 / 6330).